The sequence spans 329 residues: Porphobilinogen deaminase (329 aa).

Cys250 is modified (S-(dipyrrolylmethanemethyl)cysteine).

Belongs to the HMBS family. As to quaternary structure, monomer. It depends on dipyrromethane as a cofactor.

The enzyme catalyses 4 porphobilinogen + H2O = hydroxymethylbilane + 4 NH4(+). The protein operates within porphyrin-containing compound metabolism; protoporphyrin-IX biosynthesis; coproporphyrinogen-III from 5-aminolevulinate: step 2/4. Functionally, tetrapolymerization of the monopyrrole PBG into the hydroxymethylbilane pre-uroporphyrinogen in several discrete steps. In Burkholderia thailandensis (strain ATCC 700388 / DSM 13276 / CCUG 48851 / CIP 106301 / E264), this protein is Porphobilinogen deaminase.